Reading from the N-terminus, the 231-residue chain is Sensory transduction protein BceR (231 aa).

The Response regulatory domain occupies 3-116; sequence KLLLIEDDES…VLIAKIQAMF (114 aa). Aspartate 52 carries the 4-aspartylphosphate modification. The ompR/PhoB-type DNA-binding region spans 127 to 225; the sequence is STIKTWCGAA…KVGQGYIAKE (99 aa).

Phosphorylated by BceS.

Its subcellular location is the cytoplasm. Functionally, member of the two-component regulatory system BceS/BceR involved in the regulation of bacitracin resistance. When activated by BceS, binds to the upstream region of the bceAB promoter and up-regulates the expression of these two genes. The sequence is that of Sensory transduction protein BceR (bceR) from Bacillus subtilis (strain 168).